The primary structure comprises 369 residues: 4-hydroxy-3-methylbut-2-en-1-yl diphosphate synthase (flavodoxin) (369 aa).

The [4Fe-4S] cluster site is built by Cys268, Cys271, Cys303, and Glu310.

This sequence belongs to the IspG family. [4Fe-4S] cluster is required as a cofactor.

The enzyme catalyses (2E)-4-hydroxy-3-methylbut-2-enyl diphosphate + oxidized [flavodoxin] + H2O + 2 H(+) = 2-C-methyl-D-erythritol 2,4-cyclic diphosphate + reduced [flavodoxin]. It functions in the pathway isoprenoid biosynthesis; isopentenyl diphosphate biosynthesis via DXP pathway; isopentenyl diphosphate from 1-deoxy-D-xylulose 5-phosphate: step 5/6. In terms of biological role, converts 2C-methyl-D-erythritol 2,4-cyclodiphosphate (ME-2,4cPP) into 1-hydroxy-2-methyl-2-(E)-butenyl 4-diphosphate. The chain is 4-hydroxy-3-methylbut-2-en-1-yl diphosphate synthase (flavodoxin) from Exiguobacterium sibiricum (strain DSM 17290 / CCUG 55495 / CIP 109462 / JCM 13490 / 255-15).